A 279-amino-acid polypeptide reads, in one-letter code: NADPH-dependent 7-cyano-7-deazaguanine reductase (279 aa).

Ile-86–Ser-88 is a binding site for substrate. Ser-88–Lys-89 serves as a coordination point for NADPH. Cys-187 serves as the catalytic Thioimide intermediate. Asp-194 functions as the Proton donor in the catalytic mechanism. Residue His-226–Glu-227 coordinates substrate. An NADPH-binding site is contributed by Arg-255–Gly-256.

It belongs to the GTP cyclohydrolase I family. QueF type 2 subfamily. Homodimer.

It is found in the cytoplasm. It carries out the reaction 7-aminomethyl-7-carbaguanine + 2 NADP(+) = 7-cyano-7-deazaguanine + 2 NADPH + 3 H(+). Its pathway is tRNA modification; tRNA-queuosine biosynthesis. Functionally, catalyzes the NADPH-dependent reduction of 7-cyano-7-deazaguanine (preQ0) to 7-aminomethyl-7-deazaguanine (preQ1). The chain is NADPH-dependent 7-cyano-7-deazaguanine reductase from Actinobacillus pleuropneumoniae serotype 3 (strain JL03).